The sequence spans 189 residues: Large ribosomal subunit protein bL9 (189 aa).

It belongs to the bacterial ribosomal protein bL9 family.

Functionally, binds to the 23S rRNA. This Methylocella silvestris (strain DSM 15510 / CIP 108128 / LMG 27833 / NCIMB 13906 / BL2) protein is Large ribosomal subunit protein bL9.